We begin with the raw amino-acid sequence, 62 residues long: MGKGTPSMGKHGRSKTHIRCRRCGRHAFNVAKGYCAACGFGRSKRIRRYSWQNKKVNRIRIR.

Zn(2+) contacts are provided by C20, C23, C35, and C38. The segment at 20–38 adopts a C4-type zinc-finger fold; that stretch reads CRRCGRHAFNVAKGYCAAC.

The protein belongs to the eukaryotic ribosomal protein eL37 family. The cofactor is Zn(2+).

In terms of biological role, binds to the 23S rRNA. The polypeptide is Large ribosomal subunit protein eL37 (Staphylothermus marinus (strain ATCC 43588 / DSM 3639 / JCM 9404 / F1)).